Reading from the N-terminus, the 100-residue chain is UPF0213 protein CKO_04549 (100 aa).

The GIY-YIG domain occupies 2 to 77 (TPWYLYLIRT…KRLTKRQKER (76 aa)).

Belongs to the UPF0213 family.

The sequence is that of UPF0213 protein CKO_04549 from Citrobacter koseri (strain ATCC BAA-895 / CDC 4225-83 / SGSC4696).